A 93-amino-acid chain; its full sequence is Pyrimidine/purine nucleoside phosphorylase (93 aa).

This sequence belongs to the nucleoside phosphorylase PpnP family.

The catalysed reaction is a purine D-ribonucleoside + phosphate = a purine nucleobase + alpha-D-ribose 1-phosphate. It catalyses the reaction adenosine + phosphate = alpha-D-ribose 1-phosphate + adenine. It carries out the reaction cytidine + phosphate = cytosine + alpha-D-ribose 1-phosphate. The enzyme catalyses guanosine + phosphate = alpha-D-ribose 1-phosphate + guanine. The catalysed reaction is inosine + phosphate = alpha-D-ribose 1-phosphate + hypoxanthine. It catalyses the reaction thymidine + phosphate = 2-deoxy-alpha-D-ribose 1-phosphate + thymine. It carries out the reaction uridine + phosphate = alpha-D-ribose 1-phosphate + uracil. The enzyme catalyses xanthosine + phosphate = alpha-D-ribose 1-phosphate + xanthine. Functionally, catalyzes the phosphorolysis of diverse nucleosides, yielding D-ribose 1-phosphate and the respective free bases. Can use uridine, adenosine, guanosine, cytidine, thymidine, inosine and xanthosine as substrates. Also catalyzes the reverse reactions. The sequence is that of Pyrimidine/purine nucleoside phosphorylase from Vibrio vulnificus (strain CMCP6).